A 205-amino-acid polypeptide reads, in one-letter code: Protein phosphatase inhibitor 2 family member C (205 aa).

Disordered regions lie at residues 1 to 51 (MSAS…DESS) and 70 to 114 (EPGT…DHSC). The tract at residues 12 to 17 (KGILKN) is required for binding PPP1CC. Positions 19 to 34 (SSSGSSVATSGQQSGG) are enriched in low complexity. The segment at 43-55 (KSQKWDESSILAT) is required for binding PPP1CC. A compositionally biased stretch (basic and acidic residues) spans 84 to 102 (DSVRDVEGEDSVRGVEGKE). The required for binding PPP1CC catalytic center, displacing metal ions and inhibition of PPP1CC catalytic activity stretch occupies residues 147-150 (HYNE). A disordered region spans residues 165–205 (LQSEDDENEERPQATNEEKTAAEESEEAPLSGGLQTQSCDP). The span at 174 to 186 (ERPQATNEEKTAA) shows a compositional bias: basic and acidic residues.

It belongs to the protein phosphatase inhibitor 2 family.

In terms of biological role, functions as a protein phosphatase inhibitor. It inhibits activity of the catalytic subunit of PP1 and weakly inhibits the activity of myosin-associated phosphates. In Macaca fascicularis (Crab-eating macaque), this protein is Protein phosphatase inhibitor 2 family member C (PPP1R2C).